The chain runs to 494 residues: DEAD-box ATP-dependent RNA helicase CshA (494 aa).

The short motif at I3 to A31 is the Q motif element. The 171-residue stretch at I34–V204 folds into the Helicase ATP-binding domain. Position 47–54 (A47–T54) interacts with ATP. A DEAD box motif is present at residues D152–D155. The Helicase C-terminal domain maps to N215–A375. Residues V413 to Y494 form a required for dimerization or oligomerization region. The disordered stretch occupies residues D429–Y494. A compositionally biased stretch (basic residues) spans K443–K452. Over residues S473 to R488 the composition is skewed to basic and acidic residues.

Belongs to the DEAD box helicase family. CshA subfamily. As to quaternary structure, homodimer or oligomer. May interact with RNA helicases CshB and DbpA (DeaD). Probably a component of the RNA degradosome complex composed of rny, rnjA, rnjB, pnp, pfkA and eno, and possibly also rnpA (although rnjA and rnjB's presence is unclear). Interacts with ribosomal proteins L1 and L3 (rplA and rplC) and the protein component of RNase RnpA. Interacts with the RNA polymerase core. The cofactor is Mg(2+).

Its subcellular location is the cytoplasm. The protein resides in the nucleoid. It localises to the cell membrane. It carries out the reaction ATP + H2O = ADP + phosphate + H(+). RNA helicase activity is inhibited by EDTA. Its function is as follows. The most abundant DEAD-box RNA helicase. An ATP-dependent RNA helicase with RNA-dependent ATPase activity. May work in conjunction with the cold shock proteins to ensure proper initiation of transcription at low and optimal temperatures. In vitro, unwinds dsRNA in both 5'- and 3'- directions. Plays a role in ribosomal 50S subunit assembly. Its deletion leads to changes in mRNA levels for over 200 transcripts. This is DEAD-box ATP-dependent RNA helicase CshA from Bacillus subtilis (strain 168).